Reading from the N-terminus, the 182-residue chain is ADP-ribosylation factor-like protein 3 (182 aa).

Gly-2 carries N-myristoyl glycine lipidation. Position 5 is a phosphoserine (Ser-5). GTP contacts are provided by residues 24–31 (GLDNAGKT), Thr-48, 67–71 (DIGGQ), Gly-70, 126–129 (NKQD), and 159–161 (SAL). Mg(2+) contacts are provided by Thr-31 and Thr-48.

Belongs to the small GTPase superfamily. Arf family. In terms of assembly, found in a complex with ARL3, RP2 and UNC119 (or UNC119B); RP2 induces hydrolysis of GTP ARL3 in the complex, leading to the release of UNC119 (or UNC119B). Interacts with RP2; interaction is direct and stimulated with the activated GTP-bound form of ARL3. Interacts with SYS1. Interacts with ARL2BP; the GTP-bound form interacts with ARL2BP. Microtubule-associated protein. Does not interact with TBCC. Interacts with RP2. Interacts with PDE6D; the interaction occurs specifically with the GTP-bound form of ARL3. Interacts with GGA1; the interaction recruits PKD1:PKD2 complex to trans-Golgi network and is required for ciliary targeting of PKD1:PKD2 complex. Interacts with DNAAF9.

It is found in the golgi apparatus membrane. It localises to the cytoplasm. Its subcellular location is the cytoskeleton. The protein resides in the spindle. The protein localises to the nucleus. It is found in the microtubule organizing center. It localises to the centrosome. Its subcellular location is the cell projection. The protein resides in the cilium. Small GTP-binding protein which cycles between an inactive GDP-bound and an active GTP-bound form, and the rate of cycling is regulated by guanine nucleotide exchange factors (GEF) and GTPase-activating proteins (GAP). Required for normal cytokinesis and cilia signaling. Requires assistance from GTPase-activating proteins (GAPs) like RP2 and PDE6D, in order to cycle between inactive GDP-bound and active GTP-bound forms. Required for targeting proteins to the cilium, including myristoylated NPHP3 and prenylated INPP5E. Targets NPHP3 to the ciliary membrane by releasing myristoylated NPHP3 from UNC119B cargo adapter into the cilium. Required for PKD1:PKD2 complex targeting from the trans-Golgi network to the cilium. The protein is ADP-ribosylation factor-like protein 3 (ARL3) of Bos taurus (Bovine).